Here is a 588-residue protein sequence, read N- to C-terminus: Protein gamma response 1 (588 aa).

2 coiled-coil regions span residues 64–104 (AACD…LGKT) and 164–281 (SEVK…KTVV). 3 stretches are compositionally biased toward basic and acidic residues: residues 377–389 (KHSE…DKVR), 465–484 (NVKR…KKDD), and 508–525 (TSKK…KAER). Disordered regions lie at residues 377–398 (KHSE…SGNN) and 417–525 (PIVR…KAER).

Basal levels in mitotically dividing cells (meristems), and high levels in endoreduplicating cells (stipules, trichomes) (at protein level).

The protein resides in the nucleus. Its function is as follows. Seems to mediate cell cycle arrest before mitosis in response to DNA damage. Is probably also involved in the transition from mitosis to endoreduplication. The protein is Protein gamma response 1 (GR1) of Arabidopsis thaliana (Mouse-ear cress).